The sequence spans 426 residues: Proline--tRNA ligase (426 aa).

The protein belongs to the class-II aminoacyl-tRNA synthetase family. ProS type 2 subfamily. Homodimer.

The protein resides in the cytoplasm. It carries out the reaction tRNA(Pro) + L-proline + ATP = L-prolyl-tRNA(Pro) + AMP + diphosphate. Catalyzes the attachment of proline to tRNA(Pro) in a two-step reaction: proline is first activated by ATP to form Pro-AMP and then transferred to the acceptor end of tRNA(Pro). The chain is Proline--tRNA ligase from Rickettsia peacockii (strain Rustic).